A 307-amino-acid polypeptide reads, in one-letter code: MQSPHISVLLDEVLSFFKDLRGNFIDCTLGYAGHSSAILSQNENLNLIACDKDIEAINFSLKKLEPFGSRVKIYKSNFSELISKLSSDEISNVRGILADIGVSSLQIDKDDRGFGLGSSALDMRMDKERGFSAYDVVNGYSFDELVRIFRDYGELKNASGIANKIINARNLGEITSAKELANIIGIAQIKGRGVSPAILAFQAIRIEVNGELDELTNLLDSIEKGGFKDCLVTIITFHSLEDRIVKERFKKWANSCICPPGIYRCECGNNHELGEILTKKPLTASQSELAQNSRSKSAKLRVFKIKG.

Residues 32 to 34 (AGH), aspartate 51, isoleucine 82, aspartate 99, and glutamine 106 each bind S-adenosyl-L-methionine.

It belongs to the methyltransferase superfamily. RsmH family.

The protein localises to the cytoplasm. The catalysed reaction is cytidine(1402) in 16S rRNA + S-adenosyl-L-methionine = N(4)-methylcytidine(1402) in 16S rRNA + S-adenosyl-L-homocysteine + H(+). In terms of biological role, specifically methylates the N4 position of cytidine in position 1402 (C1402) of 16S rRNA. The polypeptide is Ribosomal RNA small subunit methyltransferase H (Campylobacter concisus (strain 13826)).